Here is a 356-residue protein sequence, read N- to C-terminus: Heparan sulfate 2-O-sulfotransferase 1 (356 aa).

Residues 1–11 are Cytoplasmic-facing; that stretch reads MGLLRIMMPPK. The chain crosses the membrane as a helical; Signal-anchor for type II membrane protein span at residues 12 to 28; that stretch reads LQLLAVVAFAVAMLFLE. Positions 24 to 51 form a coiled coil; the sequence is MLFLENQIQKLEESRAKLERAIARHEVR. The Lumenal portion of the chain corresponds to 29–356; it reads NQIQKLEESR…FYEKIYPKSN (328 aa). 6 residues coordinate adenosine 3',5'-bisphosphate: K83, T84, A85, S86, T87, and S88. 2 N-linked (GlcNAc...) asparagine glycosylation sites follow: N108 and N127. Residues H140 and H142 contribute to the active site. Positions 164 and 172 each coordinate adenosine 3',5'-bisphosphate. Disulfide bonds link C201–C209 and C222–C228. Adenosine 3',5'-bisphosphate-binding residues include Y279, S285, T290, and K293.

Belongs to the sulfotransferase 3 family. As to quaternary structure, homotrimer. Interacts with the C5-epimerase GLCE. Post-translationally, N-glycosylated. In terms of tissue distribution, widely expressed. Expressed at higher level in lung and brain. Weakly expressed in spleen.

It localises to the golgi apparatus membrane. Catalyzes the transfer of a sulfo group from 3'-phospho-5'-adenylyl sulfate (PAPS) to the 2-OH position of iduronic acid (IdoA) or glucuronic acid (GlcA) within the heparan sulfate (HS) chain and participates in HS biosynthesis. Required for metanephric development of kidney formation, suggesting that 2-O-sulfation within HS is essential for signaling between ureteric bud and metanephric mesenchyme. This chain is Heparan sulfate 2-O-sulfotransferase 1, found in Mus musculus (Mouse).